A 349-amino-acid polypeptide reads, in one-letter code: tRNA pseudouridine synthase D (349 aa).

F26 contacts substrate. D79 (nucleophile) is an active-site residue. N128 is a substrate binding site. The 150-residue stretch at 154-303 folds into the TRUD domain; that stretch reads GVPNYFGSQR…VDAARRAMLV (150 aa). Residue F329 coordinates substrate.

It belongs to the pseudouridine synthase TruD family.

The enzyme catalyses uridine(13) in tRNA = pseudouridine(13) in tRNA. In terms of biological role, responsible for synthesis of pseudouridine from uracil-13 in transfer RNAs. This chain is tRNA pseudouridine synthase D, found in Erwinia tasmaniensis (strain DSM 17950 / CFBP 7177 / CIP 109463 / NCPPB 4357 / Et1/99).